Reading from the N-terminus, the 221-residue chain is Pyridoxine/pyridoxamine 5'-phosphate oxidase (221 aa).

Positions 1 to 21 are disordered; the sequence is MDYSDPAELRESYDGAPLDPR. Substrate contacts are provided by residues 10–13 and Lys-68; that span reads RESY. FMN-binding positions include 63–68, 78–79, Arg-84, Lys-85, and Gln-107; these read RTVLLK and FT. 3 residues coordinate substrate: Tyr-125, Arg-129, and Ser-133. Residues 143-144 and Trp-189 each bind FMN; that span reads QS. 195–197 is a substrate binding site; it reads RMH. Arg-199 contacts FMN.

This sequence belongs to the pyridoxamine 5'-phosphate oxidase family. As to quaternary structure, homodimer. FMN serves as cofactor.

The enzyme catalyses pyridoxamine 5'-phosphate + O2 + H2O = pyridoxal 5'-phosphate + H2O2 + NH4(+). The catalysed reaction is pyridoxine 5'-phosphate + O2 = pyridoxal 5'-phosphate + H2O2. It participates in cofactor metabolism; pyridoxal 5'-phosphate salvage; pyridoxal 5'-phosphate from pyridoxamine 5'-phosphate: step 1/1. The protein operates within cofactor metabolism; pyridoxal 5'-phosphate salvage; pyridoxal 5'-phosphate from pyridoxine 5'-phosphate: step 1/1. In terms of biological role, catalyzes the oxidation of either pyridoxine 5'-phosphate (PNP) or pyridoxamine 5'-phosphate (PMP) into pyridoxal 5'-phosphate (PLP). The sequence is that of Pyridoxine/pyridoxamine 5'-phosphate oxidase from Thermobifida fusca (strain YX).